A 315-amino-acid chain; its full sequence is Homoserine kinase (315 aa).

Position 97 to 107 (97 to 107) interacts with ATP; the sequence is PPARGLGSSAT.

This sequence belongs to the GHMP kinase family. Homoserine kinase subfamily.

Its subcellular location is the cytoplasm. The enzyme catalyses L-homoserine + ATP = O-phospho-L-homoserine + ADP + H(+). It functions in the pathway amino-acid biosynthesis; L-threonine biosynthesis; L-threonine from L-aspartate: step 4/5. In terms of biological role, catalyzes the ATP-dependent phosphorylation of L-homoserine to L-homoserine phosphate. In Prochlorococcus marinus (strain MIT 9515), this protein is Homoserine kinase.